A 75-amino-acid polypeptide reads, in one-letter code: Putative snRNP Sm-like protein (75 aa).

A Sm domain is found at 4–75 (RPLDVIHRSL…NVLAISPTEE (72 aa)).

The protein belongs to the snRNP Sm proteins family.

In Pyrococcus abyssi (strain GE5 / Orsay), this protein is Putative snRNP Sm-like protein.